The chain runs to 97 residues: Putative membrane protein insertion efficiency factor (97 aa).

Belongs to the UPF0161 family.

It localises to the cell membrane. In terms of biological role, could be involved in insertion of integral membrane proteins into the membrane. This Lactobacillus helveticus (strain DPC 4571) protein is Putative membrane protein insertion efficiency factor.